A 211-amino-acid polypeptide reads, in one-letter code: Thiamine-phosphate synthase (211 aa).

Residues 37–41 (QLRIK) and Asn-69 contribute to the 4-amino-2-methyl-5-(diphosphooxymethyl)pyrimidine site. Residues Asp-70 and Asp-89 each coordinate Mg(2+). Position 108 (Ser-108) interacts with 4-amino-2-methyl-5-(diphosphooxymethyl)pyrimidine. 2-[(2R,5Z)-2-carboxy-4-methylthiazol-5(2H)-ylidene]ethyl phosphate is bound at residue 134-136 (TQT). Lys-137 is a 4-amino-2-methyl-5-(diphosphooxymethyl)pyrimidine binding site. 2-[(2R,5Z)-2-carboxy-4-methylthiazol-5(2H)-ylidene]ethyl phosphate-binding positions include Gly-166 and 186–187 (VS).

Belongs to the thiamine-phosphate synthase family. It depends on Mg(2+) as a cofactor.

It catalyses the reaction 2-[(2R,5Z)-2-carboxy-4-methylthiazol-5(2H)-ylidene]ethyl phosphate + 4-amino-2-methyl-5-(diphosphooxymethyl)pyrimidine + 2 H(+) = thiamine phosphate + CO2 + diphosphate. The enzyme catalyses 2-(2-carboxy-4-methylthiazol-5-yl)ethyl phosphate + 4-amino-2-methyl-5-(diphosphooxymethyl)pyrimidine + 2 H(+) = thiamine phosphate + CO2 + diphosphate. The catalysed reaction is 4-methyl-5-(2-phosphooxyethyl)-thiazole + 4-amino-2-methyl-5-(diphosphooxymethyl)pyrimidine + H(+) = thiamine phosphate + diphosphate. It participates in cofactor biosynthesis; thiamine diphosphate biosynthesis; thiamine phosphate from 4-amino-2-methyl-5-diphosphomethylpyrimidine and 4-methyl-5-(2-phosphoethyl)-thiazole: step 1/1. Its function is as follows. Condenses 4-methyl-5-(beta-hydroxyethyl)thiazole monophosphate (THZ-P) and 2-methyl-4-amino-5-hydroxymethyl pyrimidine pyrophosphate (HMP-PP) to form thiamine monophosphate (TMP). The sequence is that of Thiamine-phosphate synthase from Salmonella typhimurium (strain LT2 / SGSC1412 / ATCC 700720).